We begin with the raw amino-acid sequence, 446 residues long: Ribosomal protein uS12 methylthiotransferase RimO (446 aa).

An MTTase N-terminal domain is found at 9-121 (PKVGFVSLGC…VLDAIHAALP (113 aa)). Residues Cys18, Cys54, Cys83, Cys152, Cys156, and Cys159 each contribute to the [4Fe-4S] cluster site. The region spanning 138–375 (LTPPHYAYLK…MAVQEAISRQ (238 aa)) is the Radical SAM core domain. The TRAM domain maps to 378 to 445 (QRRVGQRQRV…AHDLYGMVVS (68 aa)).

Belongs to the methylthiotransferase family. RimO subfamily. The cofactor is [4Fe-4S] cluster.

It localises to the cytoplasm. It carries out the reaction L-aspartate(89)-[ribosomal protein uS12]-hydrogen + (sulfur carrier)-SH + AH2 + 2 S-adenosyl-L-methionine = 3-methylsulfanyl-L-aspartate(89)-[ribosomal protein uS12]-hydrogen + (sulfur carrier)-H + 5'-deoxyadenosine + L-methionine + A + S-adenosyl-L-homocysteine + 2 H(+). In terms of biological role, catalyzes the methylthiolation of an aspartic acid residue of ribosomal protein uS12. The polypeptide is Ribosomal protein uS12 methylthiotransferase RimO (Acidithiobacillus ferrooxidans (strain ATCC 23270 / DSM 14882 / CIP 104768 / NCIMB 8455) (Ferrobacillus ferrooxidans (strain ATCC 23270))).